The primary structure comprises 123 residues: Large ribosomal subunit protein uL14c (123 aa).

Belongs to the universal ribosomal protein uL14 family. Part of the 50S ribosomal subunit. Interacts with IOJAP.

The protein localises to the plastid. It localises to the chloroplast. Its function is as follows. Binds to 23S rRNA. In Zea mays (Maize), this protein is Large ribosomal subunit protein uL14c.